The primary structure comprises 1388 residues: Kinesin-like protein KIF15-A (1388 aa).

The Kinesin motor domain occupies 26-364; the sequence is AIKVFVRIRP…LQFAQRAKLI (339 aa). 110–117 is a binding site for ATP; that stretch reads GQTGSGKT. A coiled-coil region spans residues 369–1383; it reads VVNEDTQGNV…ENLFLKESKK (1015 aa). A disordered region spans residues 1127–1156; sequence EQEKIRPASSNSSSPVVLPETPRTPEGNPY. The necessary for its targeting to microtubule minus ends stretch occupies residues 1139-1388; that stretch reads SSPVVLPETP…KESKKCEHCN (250 aa).

It belongs to the TRAFAC class myosin-kinesin ATPase superfamily. Kinesin family. KLP2 subfamily. As to quaternary structure, homodimer. Dimerization is required for targeting to microtubule minus ends. Found in a complex with tpx2 and microtubules. Its association with microtubules and targeting to microtubule minus ends requires tpx2. In terms of tissue distribution, strongly expressed in testis and weakly in lung (at protein level).

The protein localises to the cytoplasm. It is found in the cytoskeleton. The protein resides in the microtubule organizing center. Its subcellular location is the centrosome. It localises to the spindle. The protein localises to the spindle pole. Its function is as follows. Plus-end directed kinesin-like motor enzyme involved in mitotic spindle assembly. Required for centrosome separation and maintenance of spindle bipolarity during mitosis. This Xenopus laevis (African clawed frog) protein is Kinesin-like protein KIF15-A (kif15-a).